A 244-amino-acid chain; its full sequence is 1-(5-phosphoribosyl)-5-[(5-phosphoribosylamino)methylideneamino] imidazole-4-carboxamide isomerase (244 aa).

D8 acts as the Proton acceptor in catalysis. D129 serves as the catalytic Proton donor.

The protein belongs to the HisA/HisF family.

Its subcellular location is the cytoplasm. It catalyses the reaction 1-(5-phospho-beta-D-ribosyl)-5-[(5-phospho-beta-D-ribosylamino)methylideneamino]imidazole-4-carboxamide = 5-[(5-phospho-1-deoxy-D-ribulos-1-ylimino)methylamino]-1-(5-phospho-beta-D-ribosyl)imidazole-4-carboxamide. Its pathway is amino-acid biosynthesis; L-histidine biosynthesis; L-histidine from 5-phospho-alpha-D-ribose 1-diphosphate: step 4/9. The sequence is that of 1-(5-phosphoribosyl)-5-[(5-phosphoribosylamino)methylideneamino] imidazole-4-carboxamide isomerase from Allorhizobium ampelinum (strain ATCC BAA-846 / DSM 112012 / S4) (Agrobacterium vitis (strain S4)).